The chain runs to 339 residues: Ketol-acid reductoisomerase (NADP(+)) (339 aa).

A KARI N-terminal Rossmann domain is found at 1 to 182 (MRVYYDRDAD…GGGRSGIIET (182 aa)). NADP(+)-binding positions include 24–27 (YGSQ), Arg-48, Ser-51, Thr-53, and 83–86 (DEHQ). The active site involves His-108. NADP(+) is bound at residue Gly-134. Positions 183 to 328 (NFREECETDL…ARLRGMMPWI (146 aa)) constitute a KARI C-terminal knotted domain. Residues Asp-191, Glu-195, Glu-227, and Glu-231 each contribute to the Mg(2+) site. Residue Ser-252 coordinates substrate.

It belongs to the ketol-acid reductoisomerase family. Requires Mg(2+) as cofactor.

The catalysed reaction is (2R)-2,3-dihydroxy-3-methylbutanoate + NADP(+) = (2S)-2-acetolactate + NADPH + H(+). It catalyses the reaction (2R,3R)-2,3-dihydroxy-3-methylpentanoate + NADP(+) = (S)-2-ethyl-2-hydroxy-3-oxobutanoate + NADPH + H(+). It functions in the pathway amino-acid biosynthesis; L-isoleucine biosynthesis; L-isoleucine from 2-oxobutanoate: step 2/4. The protein operates within amino-acid biosynthesis; L-valine biosynthesis; L-valine from pyruvate: step 2/4. Involved in the biosynthesis of branched-chain amino acids (BCAA). Catalyzes an alkyl-migration followed by a ketol-acid reduction of (S)-2-acetolactate (S2AL) to yield (R)-2,3-dihydroxy-isovalerate. In the isomerase reaction, S2AL is rearranged via a Mg-dependent methyl migration to produce 3-hydroxy-3-methyl-2-ketobutyrate (HMKB). In the reductase reaction, this 2-ketoacid undergoes a metal-dependent reduction by NADPH to yield (R)-2,3-dihydroxy-isovalerate. In Caulobacter sp. (strain K31), this protein is Ketol-acid reductoisomerase (NADP(+)).